Consider the following 281-residue polypeptide: Pantothenate synthetase (281 aa).

Residue 30 to 37 (MGNLHQGH) participates in ATP binding. The active-site Proton donor is His37. Gln61 is a (R)-pantoate binding site. Beta-alanine is bound at residue Gln61. 149-152 (GNKD) contributes to the ATP binding site. Gln155 provides a ligand contact to (R)-pantoate. Residues Ile178 and 186–189 (MSSR) each bind ATP.

This sequence belongs to the pantothenate synthetase family. Homodimer.

The protein localises to the cytoplasm. The enzyme catalyses (R)-pantoate + beta-alanine + ATP = (R)-pantothenate + AMP + diphosphate + H(+). It functions in the pathway cofactor biosynthesis; (R)-pantothenate biosynthesis; (R)-pantothenate from (R)-pantoate and beta-alanine: step 1/1. In terms of biological role, catalyzes the condensation of pantoate with beta-alanine in an ATP-dependent reaction via a pantoyl-adenylate intermediate. This Shewanella sp. (strain MR-7) protein is Pantothenate synthetase.